The following is a 429-amino-acid chain: Ribosomal RNA small subunit methyltransferase B (429 aa).

Residues C254 to K260, D277, D303, and D322 contribute to the S-adenosyl-L-methionine site. The active-site Nucleophile is the C375. Residues A397–D419 form a disordered region. Positions E400–L412 are enriched in polar residues.

The protein belongs to the class I-like SAM-binding methyltransferase superfamily. RsmB/NOP family.

The protein localises to the cytoplasm. It carries out the reaction cytidine(967) in 16S rRNA + S-adenosyl-L-methionine = 5-methylcytidine(967) in 16S rRNA + S-adenosyl-L-homocysteine + H(+). Functionally, specifically methylates the cytosine at position 967 (m5C967) of 16S rRNA. This chain is Ribosomal RNA small subunit methyltransferase B, found in Salmonella paratyphi A (strain ATCC 9150 / SARB42).